We begin with the raw amino-acid sequence, 61 residues long: Small ribosomal subunit protein uS14 (61 aa).

The Zn(2+) site is built by cysteine 24, cysteine 27, cysteine 40, and cysteine 43.

Belongs to the universal ribosomal protein uS14 family. Zinc-binding uS14 subfamily. As to quaternary structure, part of the 30S ribosomal subunit. Contacts proteins S3 and S10. The cofactor is Zn(2+).

Binds 16S rRNA, required for the assembly of 30S particles and may also be responsible for determining the conformation of the 16S rRNA at the A site. The chain is Small ribosomal subunit protein uS14 from Mycoplasma capricolum subsp. capricolum (strain California kid / ATCC 27343 / NCTC 10154).